The chain runs to 263 residues: LOB domain-containing protein 41 (263 aa).

One can recognise an LOB domain in the interval methionine 3–valine 109. The interval threonine 162–serine 204 is disordered. 2 stretches are compositionally biased toward basic and acidic residues: residues serine 169–histidine 178 and alanine 190–glutamate 200.

This sequence belongs to the LOB domain-containing protein family. In terms of tissue distribution, expressed in young shoots, roots, stems, leaves and flowers.

This Arabidopsis thaliana (Mouse-ear cress) protein is LOB domain-containing protein 41 (LBD41).